The primary structure comprises 557 residues: Dihydroxy-acid dehydratase (557 aa).

D78 contributes to the Mg(2+) binding site. C119 lines the [2Fe-2S] cluster pocket. The Mg(2+) site is built by D120 and K121. K121 is modified (N6-carboxylysine). A [2Fe-2S] cluster-binding site is contributed by C192. E442 is a Mg(2+) binding site. S468 acts as the Proton acceptor in catalysis.

This sequence belongs to the IlvD/Edd family. In terms of assembly, homodimer. [2Fe-2S] cluster serves as cofactor. Requires Mg(2+) as cofactor.

It catalyses the reaction (2R)-2,3-dihydroxy-3-methylbutanoate = 3-methyl-2-oxobutanoate + H2O. The enzyme catalyses (2R,3R)-2,3-dihydroxy-3-methylpentanoate = (S)-3-methyl-2-oxopentanoate + H2O. It participates in amino-acid biosynthesis; L-isoleucine biosynthesis; L-isoleucine from 2-oxobutanoate: step 3/4. Its pathway is amino-acid biosynthesis; L-valine biosynthesis; L-valine from pyruvate: step 3/4. In terms of biological role, functions in the biosynthesis of branched-chain amino acids. Catalyzes the dehydration of (2R,3R)-2,3-dihydroxy-3-methylpentanoate (2,3-dihydroxy-3-methylvalerate) into 2-oxo-3-methylpentanoate (2-oxo-3-methylvalerate) and of (2R)-2,3-dihydroxy-3-methylbutanoate (2,3-dihydroxyisovalerate) into 2-oxo-3-methylbutanoate (2-oxoisovalerate), the penultimate precursor to L-isoleucine and L-valine, respectively. This Bacillus cereus (strain Q1) protein is Dihydroxy-acid dehydratase.